The chain runs to 1785 residues: Mellein synthase (1785 aa).

Residues 1–36 form a disordered region; the sequence is MATPDDPATPALSLSASNSSSPTAASSVPPPTGTSE. Residues 8 to 27 show a composition bias toward low complexity; sequence ATPALSLSASNSSSPTAASS. In terms of domain architecture, Ketosynthase family 3 (KS3) spans 39–464; the sequence is YDDVAIIGMS…GTVSHAIIEQ (426 aa). Residues Cys-211, His-346, and His-386 each act as for beta-ketoacyl synthase activity in the active site. The tract at residues 575-888 is malonyl-CoA:ACP transacylase (MAT) domain; sequence VWVFSGHGSH…AVAQLWTKGV (314 aa). The active-site For malonyltransferase activity is the Ser-661. The tract at residues 933 to 1047 is N-terminal hotdog fold; sequence NNMLGQRMVV…ASWENEPSAN (115 aa). In terms of domain architecture, PKS/mFAS DH spans 933–1206; sequence NNMLGQRMVV…FTEVEATPTK (274 aa). The segment at 935–1203 is dehydratase (DH) domain; sequence MLGQRMVVAG…SIRFTEVEAT (269 aa). The active-site Proton acceptor; for dehydratase activity is His-965. Residues 1062 to 1206 form a C-terminal hotdog fold region; the sequence is GTRVSETFSV…FTEVEATPTK (145 aa). Asp-1123 (proton donor; for dehydratase activity) is an active-site residue. The ketoreductase (KR) domain stretch occupies residues 1418–1608; sequence GTYVLTGGLG…AIAFQWTAWR (191 aa). The span at 1681-1698 shows a compositional bias: polar residues; sequence QDQSAPASGNASDSSGRP. Positions 1681–1701 are disordered; the sequence is QDQSAPASGNASDSSGRPTAS. One can recognise a Carrier domain in the interval 1706 to 1781; that stretch reads PWLDVKIREC…AMVGWFQKQF (76 aa). The residue at position 1741 (Ser-1741) is an O-(pantetheine 4'-phosphoryl)serine.

It functions in the pathway secondary metabolite biosynthesis. In terms of biological role, polyketide synthase that produces (R)-mellein, a secondary metabolite that inhibits the germination of wheat (Triticum aestivum) and barrel medic (Medicago truncatula) seeds. Condensates 1 acetate starter unit and 4 extender malonate units. The nascent pentaketide intermediate then undergoes an aldol cyclization and is aromatized via dehydration. The (R)-O-methylmellein isolated from P.nodorum is most likely to be derived from (R)-mellein via an additional methylation at the hydroxyl group. Interestingly, no O-methyltransferase gene is encoded in the vicinity of MLNS on the chromosome. Thus, the O-methylation is likely to be catalyzed by an endogenous O-methyltransferase encoded elsewhere in the genome of P.nodorum. The chain is Mellein synthase from Phaeosphaeria nodorum (strain SN15 / ATCC MYA-4574 / FGSC 10173) (Glume blotch fungus).